The following is a 528-amino-acid chain: NAD(P)H-quinone oxidoreductase chain 4 1 (528 aa).

The next 14 membrane-spanning stretches (helical) occupy residues 7-27, 32-52, 86-106, 114-134, 136-156, 168-188, 208-228, 242-262, 276-296, 310-330, 331-351, 375-395, 417-437, and 463-483; these read FPWL…IPLI, WVRW…AYVF, LSLP…VAAW, LFFF…LAQD, LLFF…ISIW, FILY…AMAF, ALEL…LPIF, SAPI…YGLI, FAPV…LAAF, IAHM…GING, AVLQ…LTGI, FALF…SGFV, GIAL…LSML, and MAVA…PRLA.

This sequence belongs to the complex I subunit 4 family.

The protein resides in the cellular thylakoid membrane. It carries out the reaction a plastoquinone + NADH + (n+1) H(+)(in) = a plastoquinol + NAD(+) + n H(+)(out). The catalysed reaction is a plastoquinone + NADPH + (n+1) H(+)(in) = a plastoquinol + NADP(+) + n H(+)(out). NDH-1 shuttles electrons from NAD(P)H, via FMN and iron-sulfur (Fe-S) centers, to quinones in the respiratory chain. The immediate electron acceptor for the enzyme in this species is believed to be plastoquinone. Couples the redox reaction to proton translocation (for every two electrons transferred, four hydrogen ions are translocated across the cytoplasmic membrane), and thus conserves the redox energy in a proton gradient. The chain is NAD(P)H-quinone oxidoreductase chain 4 1 from Synechococcus sp. (strain JA-2-3B'a(2-13)) (Cyanobacteria bacterium Yellowstone B-Prime).